A 304-amino-acid polypeptide reads, in one-letter code: Hairy/enhancer-of-split related with YRPW motif protein 1 (304 aa).

Residues 1-52 form a disordered region; that stretch reads MKRAHPEYSSSDSELDETIEVEKESADENGNLSSALGSMSPTTSSQILARKR. Positions 28–47 are enriched in polar residues; the sequence is ENGNLSSALGSMSPTTSSQI. Positions 48–117 are transcriptional repression and interaction with NCOR1 and SIN3A; that stretch reads LARKRRRGII…GGKGYFDAHA (70 aa). The bHLH domain occupies 49–104; sequence ARKRRRGIIEKRRRDRINNSLSELRRLVPSAFEKQGSAKLEKAEILQMTVDHLKML. The region spanning 122 to 158 is the Orange domain; that stretch reads YRSLGFRECLAEVARYLSIIEGLDASDPLRVRLVSHL. Residues 196-234 form a disordered region; sequence LPQNGHGNAGTTASPTEPHHQGRLGSAHPEAPALRAPPS. The segment covering 200–210 has biased composition (polar residues); sequence GHGNAGTTASP. A YRPW motif motif is present at residues 294 to 297; it reads YRPW.

The protein belongs to the HEY family. Self-associates. Interacts with HES1 and HEYL. Interacts with HDAC1, NCOR1 and SIN3A. Interacts with GATA4 and GATA6. Interacts with CCDC89/BOIP. In terms of tissue distribution, expressed in the somitic mesoderm, the central nervous system, the kidney, the heart, nasal epithelium, and limbs.

The protein resides in the nucleus. Transcriptional repressor which binds preferentially to the canonical E box sequence 5'-CACGTG-3'. Downstream effector of Notch signaling required for cardiovascular development. Specifically required for the Notch-induced endocardial epithelial to mesenchymal transition, which is itself criticial for cardiac valve and septum development. May be required in conjunction with HEY2 to specify arterial cell fate or identity. Promotes maintenance of neuronal precursor cells and glial versus neuronal fate specification. Represses transcription by the cardiac transcriptional activators GATA4 and GATA6 and by the neuronal bHLH factors ASCL1/MASH1 and NEUROD4/MATH3. Involved in the regulation of liver cancer cells self-renewal. This is Hairy/enhancer-of-split related with YRPW motif protein 1 (HEY1) from Homo sapiens (Human).